Consider the following 777-residue polypeptide: Glucocorticoid receptor (777 aa).

Over residues 1 to 14 (MDSKESLTPGREEN) the composition is skewed to basic and acidic residues. Residues 1-23 (MDSKESLTPGREENPSSVLAQER) are disordered. Residues 1 to 420 (MDSKESLTPG…TATTGPPPKL (420 aa)) form a modulating region. A Phosphothreonine modification is found at Thr8. Arg23 is subject to Omega-N-methylarginine. 4 positions are modified to phosphoserine: Ser45, Ser113, Ser134, and Ser141. Residues 130 to 140 (NRSTSVPENPK) are compositionally biased toward polar residues. Positions 130–183 (NRSTSVPENPKSSASTAVSAAPTEKEFPKTHSDISSEQQHLKGQTGTNGGNVKL) are disordered. The span at 141-150 (SSASTAVSAA) shows a compositional bias: low complexity. The segment covering 152 to 163 (TEKEFPKTHSDI) has biased composition (basic and acidic residues). Positions 164 to 174 (SSEQQHLKGQT) are enriched in polar residues. A phosphoserine mark is found at Ser203, Ser211, and Ser226. A Glycyl lysine isopeptide (Lys-Gly) (interchain with G-Cter in SUMO2) cross-link involves residue Lys258. At Ser267 the chain carries Phosphoserine. Residues Lys277 and Lys293 each participate in a glycyl lysine isopeptide (Lys-Gly) (interchain with G-Cter in SUMO); alternate cross-link. Residues Lys277 and Lys293 each participate in a glycyl lysine isopeptide (Lys-Gly) (interchain with G-Cter in SUMO2); alternate cross-link. The span at 394-414 (SSPSMRPDVSSPPSSSSTATT) shows a compositional bias: low complexity. The segment at 394–415 (SSPSMRPDVSSPPSSSSTATTG) is disordered. At Ser404 the chain carries Phosphoserine. Lys419 is covalently cross-linked (Glycyl lysine isopeptide (Lys-Gly) (interchain with G-Cter in ubiquitin)). NR C4-type zinc fingers lie at residues 421-441 (CLVC…CGSC) and 457-476 (CAGR…CPAC). The segment at residues 421–486 (CLVCSDEASG…RYRKCLQAGM (66 aa)) is a DNA-binding region (nuclear receptor). An N6-acetyllysine mark is found at Lys480, Lys492, Lys494, and Lys495. An interaction with CLOCK region spans residues 485-777 (GMNLEARKTK…NIKKLLFHQK (293 aa)). The hinge stretch occupies residues 487-523 (NLEARKTKKKIKGIQQATTGVSQETPENPANKTIVPA). Residues 524–758 (TLPQLTPTLV…FPEMLAEIIT (235 aa)) enclose the NR LBD domain. Positions 532–697 (LVSLLEVIEP…EIRMTYIKEL (166 aa)) are interaction with CRY1. Residue Lys703 forms a Glycyl lysine isopeptide (Lys-Gly) (interchain with G-Cter in SUMO) linkage.

It belongs to the nuclear hormone receptor family. NR3 subfamily. In terms of assembly, heteromultimeric cytoplasmic complex with HSP90AA1, HSPA1A/HSPA1B, and FKBP5 or another immunophilin such as PPID, STIP1, or the immunophilin homolog PPP5C. Upon ligand binding FKBP5 dissociates from the complex and FKBP4 takes its place, thereby linking the complex to dynein and mediating transport to the nucleus, where the complex dissociates. Probably forms a complex composed of chaperones HSP90 and HSP70, co-chaperones CDC37, PPP5C, TSC1 and client protein TSC2, CDK4, AKT, RAF1 and NR3C1; this complex does not contain co-chaperones STIP1/HOP and PTGES3/p23. Directly interacts with UNC45A. Binds to DNA as a homodimer, and as heterodimer with NR3C2 or the retinoid X receptor. Binds STAT5A and STAT5B homodimers and heterodimers. Interacts with NRIP1, POU2F1, POU2F2 and TRIM28. Interacts with several coactivator complexes, including the SMARCA4 complex, CREBBP/EP300, TADA2L (Ada complex) and p160 coactivators such as NCOA2 and NCOA6. Interaction with BAG1 inhibits transactivation. Interacts with HEXIM1 and TGFB1I1. Interacts with NCOA1. Interacts with NCOA3, SMARCA4, SMARCC1, SMARCD1, and SMARCE1. Interacts with CLOCK, CRY1 and CRY2 in a ligand-dependent fashion. Interacts with CIART. Interacts with RWDD3. Interacts with UBE2I/UBC9 and this interaction is enhanced in the presence of RWDD3. Interacts with GRIP1. Interacts with NR4A3 (via nuclear receptor DNA-binding domain), represses transcription activity of NR4A3 on the POMC promoter Nur response element (NurRE). Directly interacts with PNRC2 to attract and form a complex with UPF1 and DCP1A; the interaction leads to rapid mRNA degradation. Interacts with GSK3B. Interacts with FNIP1 and FNIP2. Interacts (via C-terminus) with HNRNPU (via C-terminus). Interacts with MCM3AP. Interacts (via domain NR LBD) with HSP90AA1 and HSP90AB1. In the absence of hormonal ligand, interacts with TACC1. Interacts (via NR LBD domain) with ZNF764 (via KRAB domain); the interaction regulates transcription factor activity of NR3C1 by directing its actions toward certain biologic pathways. In terms of processing, acetylation by CLOCK reduces its binding to glucocorticoid response elements and its transcriptional activity. Post-translationally, increased proteasome-mediated degradation in response to glucocorticoids. Phosphorylated in the absence of hormone; becomes hyperphosphorylated in the presence of glucocorticoid. The Ser-203, Ser-226 and Ser-404-phosphorylated forms are mainly cytoplasmic, and the Ser-211-phosphorylated form is nuclear. Phosphorylation at Ser-211 increases transcriptional activity. Phosphorylation at Ser-203, Ser-226 and Ser-404 decreases signaling capacity. Phosphorylation at Ser-404 may protect from glucocorticoid-induced apoptosis. Phosphorylation at Ser-203 and Ser-211 is not required in regulation of chromosome segregation. May be dephosphorylated by PPP5C, attenuates NR3C1 action. In terms of processing, ubiquitinated by UBR5, leading to its degradation: UBR5 specifically recognizes and binds ligand-bound NR3C1 when it is not associated with coactivators (NCOAs). In presence of NCOAs, the UBR5-degron is not accessible, preventing its ubiquitination and degradation. Post-translationally, sumoylation at Lys-277 and Lys-293 negatively regulates its transcriptional activity. Sumoylation at Lys-703 positively regulates its transcriptional activity in the presence of RWDD3. Sumoylation at Lys-277 and Lys-293 is dispensable whereas sumoylation at Lys-703 is critical for the stimulatory effect of RWDD3 on its transcriptional activity. Heat shock increases sumoylation in a RWDD3-dependent manner.

It localises to the cytoplasm. The protein resides in the nucleus. Its subcellular location is the mitochondrion. It is found in the cytoskeleton. The protein localises to the spindle. It localises to the microtubule organizing center. The protein resides in the centrosome. Its subcellular location is the chromosome. It is found in the nucleoplasm. Its function is as follows. Receptor for glucocorticoids (GC). Has a dual mode of action: as a transcription factor that binds to glucocorticoid response elements (GRE), both for nuclear and mitochondrial DNA, and as a modulator of other transcription factors. Affects inflammatory responses, cellular proliferation and differentiation in target tissues. Involved in chromatin remodeling. Plays a role in rapid mRNA degradation by binding to the 5' UTR of target mRNAs and interacting with PNRC2 in a ligand-dependent manner which recruits the RNA helicase UPF1 and the mRNA-decapping enzyme DCP1A, leading to RNA decay. Could act as a coactivator for STAT5-dependent transcription upon growth hormone (GH) stimulation and could reveal an essential role of hepatic GR in the control of body growth. Mediates glucocorticoid-induced apoptosis. Promotes accurate chromosome segregation during mitosis. May act as a tumor suppressor. May play a negative role in adipogenesis through the regulation of lipolytic and antilipogenic gene expression. The chain is Glucocorticoid receptor (NR3C1) from Pongo abelii (Sumatran orangutan).